Reading from the N-terminus, the 161-residue chain is Tick receptor for ospA (161 aa).

In terms of assembly, interacts with ospA protein from B.burgdorferi. Glycosylated. As to expression, specifically expressed in gut. Localizes predominantly in the intercellular spaces and luminal surface of the gut. In the gut, it localizes along tight junctions. Not expressed in salivary gland or hemolymph.

It is found in the cell membrane. In terms of biological role, serves as a receptor for ospA protein of B.burgdorferi, the Lyme disease agent. Required for spirochetal colonization. Essential for pathogen adherence to the vector. The protein is Tick receptor for ospA (TROSPA) of Ixodes scapularis (Black-legged tick).